We begin with the raw amino-acid sequence, 371 residues long: MDFQLQAVDDNARAGLLNLAHSQVATPVFMPVGTQGCIKSLDATDAQEILGAKLILANTYHMYLRPGEKVVGQLGGLHRFAQFQGSFLTDSGGFQAFSLSGNIKLQEDGIVFKSHIDGSKHLFTPAKVLDIQYSLNSDIMMVLDDLVGLPAPLKRLEESIKRSAKWANLSLEYHKQKNRPSNNLFAIIQGGTHLKMRSLSVGLTHEGFDGYAIGGLAVGESVDEMLETIAHTAPLLPKDKPRYLMGVGTPENILDAIGLGVDMFDCVMPTRNARNATLFTYSGKISIKNAPYKLDNTPIEENCACYTCKRYSKAYLHHLFRAKELTYARLASLHNLHFYLELVKNARNAILEKRFLSFKKEFLEKYNSRSH.

Asp-90 acts as the Proton acceptor in catalysis. Residues 90-94 (DSGGF), Asp-144, Gln-189, and Gly-215 contribute to the substrate site. The segment at 246-252 (GVGTPEN) is RNA binding. Asp-265 serves as the catalytic Nucleophile. An RNA binding; important for wobble base 34 recognition region spans residues 270-274 (TRNAR). Residues Cys-303, Cys-305, Cys-308, and His-334 each contribute to the Zn(2+) site.

The protein belongs to the queuine tRNA-ribosyltransferase family. In terms of assembly, homodimer. Within each dimer, one monomer is responsible for RNA recognition and catalysis, while the other monomer binds to the replacement base PreQ1. Zn(2+) serves as cofactor.

It catalyses the reaction 7-aminomethyl-7-carbaguanine + guanosine(34) in tRNA = 7-aminomethyl-7-carbaguanosine(34) in tRNA + guanine. The protein operates within tRNA modification; tRNA-queuosine biosynthesis. Functionally, catalyzes the base-exchange of a guanine (G) residue with the queuine precursor 7-aminomethyl-7-deazaguanine (PreQ1) at position 34 (anticodon wobble position) in tRNAs with GU(N) anticodons (tRNA-Asp, -Asn, -His and -Tyr). Catalysis occurs through a double-displacement mechanism. The nucleophile active site attacks the C1' of nucleotide 34 to detach the guanine base from the RNA, forming a covalent enzyme-RNA intermediate. The proton acceptor active site deprotonates the incoming PreQ1, allowing a nucleophilic attack on the C1' of the ribose to form the product. After dissociation, two additional enzymatic reactions on the tRNA convert PreQ1 to queuine (Q), resulting in the hypermodified nucleoside queuosine (7-(((4,5-cis-dihydroxy-2-cyclopenten-1-yl)amino)methyl)-7-deazaguanosine). In Helicobacter pylori (strain HPAG1), this protein is Queuine tRNA-ribosyltransferase.